Consider the following 468-residue polypeptide: Cysteine--tRNA ligase (468 aa).

A Zn(2+)-binding site is contributed by cysteine 27. Positions 29–39 (PTVYDDAHLGH) match the 'HIGH' region motif. Cysteine 204, histidine 234, and glutamate 238 together coordinate Zn(2+). Residues 266–270 (KMSKS) carry the 'KMSKS' region motif. Lysine 269 lines the ATP pocket.

It belongs to the class-I aminoacyl-tRNA synthetase family. As to quaternary structure, monomer. Zn(2+) is required as a cofactor.

Its subcellular location is the cytoplasm. It catalyses the reaction tRNA(Cys) + L-cysteine + ATP = L-cysteinyl-tRNA(Cys) + AMP + diphosphate. The chain is Cysteine--tRNA ligase from Campylobacter hominis (strain ATCC BAA-381 / DSM 21671 / CCUG 45161 / LMG 19568 / NCTC 13146 / CH001A).